The chain runs to 153 residues: MRLKVLWVGKTQEEWVRRGIDEYAGRIGRYMSIDLAEARDEKGAAVEAMREREGERLLKLLPKNARLVLLDERGEQMSSPELARFLATNRDGGTQELVFVIGGAYGFSDSLRAKAFKTISLSRMTFTHQMVRIFLLEQLYRGFTIINGEPYHH.

S-adenosyl-L-methionine contacts are provided by residues leucine 70, glycine 102, and 121–126 (LSRMTF).

This sequence belongs to the RNA methyltransferase RlmH family. As to quaternary structure, homodimer.

Its subcellular location is the cytoplasm. The catalysed reaction is pseudouridine(1915) in 23S rRNA + S-adenosyl-L-methionine = N(3)-methylpseudouridine(1915) in 23S rRNA + S-adenosyl-L-homocysteine + H(+). Functionally, specifically methylates the pseudouridine at position 1915 (m3Psi1915) in 23S rRNA. The protein is Ribosomal RNA large subunit methyltransferase H of Geotalea daltonii (strain DSM 22248 / JCM 15807 / FRC-32) (Geobacter daltonii).